We begin with the raw amino-acid sequence, 149 residues long: Cell division protein SepF (149 aa).

The interval 12–57 (SNEEDDYYEEDGYEQSQQQEQQTTQQTSSQPRFVRQTTQSQTPAGL) is disordered. Residues 13–24 (NEEDDYYEEDGY) are compositionally biased toward acidic residues. Residues 25-41 (EQSQQQEQQTTQQTSSQ) show a composition bias toward low complexity. The segment covering 46 to 57 (RQTTQSQTPAGL) has biased composition (polar residues).

This sequence belongs to the SepF family. Homodimer. Interacts with FtsZ.

It is found in the cytoplasm. Cell division protein that is part of the divisome complex and is recruited early to the Z-ring. Probably stimulates Z-ring formation, perhaps through the cross-linking of FtsZ protofilaments. Its function overlaps with FtsA. The polypeptide is Cell division protein SepF (Leuconostoc mesenteroides subsp. mesenteroides (strain ATCC 8293 / DSM 20343 / BCRC 11652 / CCM 1803 / JCM 6124 / NCDO 523 / NBRC 100496 / NCIMB 8023 / NCTC 12954 / NRRL B-1118 / 37Y)).